The sequence spans 277 residues: MKIPSIGYVFFLIFISITIVSSSPDHGEVEDETQFNYEKKGEKGPENWGRLKPEWAMCGKGNMQSPIDLTDKRVLIDHNLGYLRSQYLPSNATIKNRGHDIMMKFEGGNAGLGITINGTEYKLQQIHWHSPSEHTLNGKRFVLEEHMVHQSKDGRNAVVAFFYKLGKPDYFLLTLERYLKRITDTHESQEFVEMVHPRTFGFESKHYYRFIGSLTTPPCSENVIWTISKEMRTVTLKQLIMLRVTVHDQSNSNARPLQRKNERPVALYIPTWHSKLY.

The first 22 residues, 1 to 22 (MKIPSIGYVFFLIFISITIVSS), serve as a signal peptide directing secretion. The Alpha-carbonic anhydrase domain maps to 33–269 (TQFNYEKKGE…KNERPVALYI (237 aa)). C58 and C219 form a disulfide bridge. An N-linked (GlcNAc...) asparagine glycan is attached at N91. H99 functions as the Proton acceptor in the catalytic mechanism. N-linked (GlcNAc...) asparagine glycosylation is present at N117. Positions 127, 129, and 146 each coordinate Zn(2+). 215–216 (TT) contacts substrate.

Belongs to the alpha-class carbonic anhydrase family. Zn(2+) serves as cofactor. In terms of processing, N-glycosylated.

It localises to the plastid. Its subcellular location is the chloroplast stroma. It carries out the reaction hydrogencarbonate + H(+) = CO2 + H2O. Its function is as follows. Reversible hydration of carbon dioxide. The chain is Alpha carbonic anhydrase 5 (ACA5) from Arabidopsis thaliana (Mouse-ear cress).